Consider the following 62-residue polypeptide: Large ribosomal subunit protein uL29 (62 aa).

It belongs to the universal ribosomal protein uL29 family.

The protein is Large ribosomal subunit protein uL29 of Desulfatibacillum aliphaticivorans.